The sequence spans 152 residues: SXP/RAL-2 family protein Ani s 5 (152 aa).

A signal peptide spans 1–18; the sequence is MKTLIVAALFCTIGMALA. Necessary for IgE-binding regions lie at residues 25 to 42, 49 to 54, 58 to 66, and 103 to 120; these read PPFL…FFEL, KTDPEI, LDAWVDTLG, and KKAD…SLNG. IgG4-binding regions lie at residues 49-68 and 118-137; these read KTDP…LGGD and LNGI…LPQS. The segment at 127 to 146 is igE-binding and IgG4-binding; sequence IQAIYKTLPQSVKDELEKGI.

The protein belongs to the SXP/RAL-2 family. In terms of assembly, monomer. As to expression, excretory gland, ventriculus, and the luminal epithelium of the intestine of the larvae.

Its subcellular location is the secreted. The protein is SXP/RAL-2 family protein Ani s 5 of Anisakis simplex (Herring worm).